We begin with the raw amino-acid sequence, 614 residues long: MNAQLSALQQQAQQLSASVTRPIPGSRKIHVPGSRPDLQVPMREIALTRTPTLFGGEENAPVTVYDTSGPYTDPEVRIDLSAGLPALRRGWVEERGDTEQLEGLSSSFGRDREHDPKLDAVRFPARSLPRRARAGANVTQMHYARRGIITPEMEFVAIRENQRLDAIRDAGLLQQHPGEAFGASIQKVITPEFVRDEIARGRAVLPNNINHPESEPMIIGRNFLTKINANIGNSAVSSGIAEEVEKLVWAIRWGGDTVMDLSTGKHIHETREWIIRNSPVAIGTVPIYQALEKVDGRAEALTWEIFRDTLIEQAEQGVDYFTIHAGVLLRYVPLTAKRVTGIVSRGGSIMAKWCLAHHKENFLYTHFEDICEIMKAYDVTFSLGDGLRPGCIADANDAAQFGELETLGELTKIAWKHDVQTMIEGPGHVPMQLIKENMDKQLRECGEAPFYTLGPLTTDIAPGYDHITSAIGAAMIGWFGTAMLCYVTPKEHLGLPNRQDVRDGIMAYRIAAHAADLAKGHPGAQVRDNALSKARFEFRWEDQFHLGLDPEKAKEFHDETLPKDAHKLAHFCSMCGPHFCSMKITQDVRDYAEAGMKEKSQEFRAGGAEVYRQG.

Residues N230, M259, Y288, H324, 344-346, 385-388, and E424 each bind substrate; these read SRG and DGLR. H428 is a binding site for Zn(2+). Y451 lines the substrate pocket. Position 492 (H492) interacts with Zn(2+). Residues C572, C575, and C580 each coordinate [4Fe-4S] cluster.

The protein belongs to the ThiC family. In terms of assembly, homodimer. The cofactor is [4Fe-4S] cluster.

It carries out the reaction 5-amino-1-(5-phospho-beta-D-ribosyl)imidazole + S-adenosyl-L-methionine = 4-amino-2-methyl-5-(phosphooxymethyl)pyrimidine + CO + 5'-deoxyadenosine + formate + L-methionine + 3 H(+). The protein operates within cofactor biosynthesis; thiamine diphosphate biosynthesis. In terms of biological role, catalyzes the synthesis of the hydroxymethylpyrimidine phosphate (HMP-P) moiety of thiamine from aminoimidazole ribotide (AIR) in a radical S-adenosyl-L-methionine (SAM)-dependent reaction. This chain is Phosphomethylpyrimidine synthase, found in Stenotrophomonas maltophilia (strain K279a).